A 435-amino-acid polypeptide reads, in one-letter code: Trigger factor (435 aa).

Residues 163 to 248 (DDITLIDFTG…INEIKRKELA (86 aa)) form the PPIase FKBP-type domain.

Belongs to the FKBP-type PPIase family. Tig subfamily.

The protein localises to the cytoplasm. It carries out the reaction [protein]-peptidylproline (omega=180) = [protein]-peptidylproline (omega=0). Involved in protein export. Acts as a chaperone by maintaining the newly synthesized protein in an open conformation. Functions as a peptidyl-prolyl cis-trans isomerase. This chain is Trigger factor, found in Desulforamulus reducens (strain ATCC BAA-1160 / DSM 100696 / MI-1) (Desulfotomaculum reducens).